A 256-amino-acid chain; its full sequence is MISAQNLVYSLQGRRLTDNVSLTFPGGEIVAILGPNGAGKSTLLRQLTGYLQPDSGECRLFNKPLNEWSITELAKHRAVMRQNSHMAFPFSVQEVIQMGRHPHRTGNQDNETAQIMALCDCQALANRDYRQLSGGEQQRVQLARLLVQLWEPTPSPKWLFLDEPTSALDIHHQQHLFRLLRQLVHERQFNVCCVLHDLNLAARYADRVVLMQKGKVIANGKPQDVLTQQALTMLYGADITVLKDPANHSPLIVLDH.

The ABC transporter domain occupies 2–238 (ISAQNLVYSL…QALTMLYGAD (237 aa)). 34–41 (GPNGAGKS) lines the ATP pocket.

The protein belongs to the ABC transporter superfamily. Heme (hemin) importer (TC 3.A.1.14.5) family. In terms of assembly, the complex is composed of two ATP-binding proteins (HmuV), two transmembrane proteins (HmuU) and a solute-binding protein (HmuT).

Its subcellular location is the cell inner membrane. In terms of biological role, part of the ABC transporter complex HmuTUV involved in hemin import. Responsible for energy coupling to the transport system. This chain is Hemin import ATP-binding protein HmuV, found in Escherichia coli O6:K15:H31 (strain 536 / UPEC).